Here is a 238-residue protein sequence, read N- to C-terminus: 7-cyano-7-deazaguanine synthase (238 aa).

12–22 (FSGGQDSTTCL) provides a ligand contact to ATP. Residues Cys191, Cys200, Cys203, and Cys206 each contribute to the Zn(2+) site.

Belongs to the QueC family. Zn(2+) is required as a cofactor.

The catalysed reaction is 7-carboxy-7-deazaguanine + NH4(+) + ATP = 7-cyano-7-deazaguanine + ADP + phosphate + H2O + H(+). The protein operates within purine metabolism; 7-cyano-7-deazaguanine biosynthesis. Catalyzes the ATP-dependent conversion of 7-carboxy-7-deazaguanine (CDG) to 7-cyano-7-deazaguanine (preQ(0)). This chain is 7-cyano-7-deazaguanine synthase, found in Shewanella oneidensis (strain ATCC 700550 / JCM 31522 / CIP 106686 / LMG 19005 / NCIMB 14063 / MR-1).